The primary structure comprises 595 residues: Aspartate--tRNA ligase (595 aa).

Glu-171 is a binding site for L-aspartate. The segment at 195–198 is aspartate; sequence QLFK. Arg-217 is a binding site for L-aspartate. ATP contacts are provided by residues 217 to 219 and Gln-226; that span reads RDE. L-aspartate is bound at residue His-448. ATP is bound at residue Glu-482. Arg-489 is a binding site for L-aspartate. 534–537 lines the ATP pocket; the sequence is GLDR.

The protein belongs to the class-II aminoacyl-tRNA synthetase family. Type 1 subfamily. In terms of assembly, homodimer.

It is found in the cytoplasm. It carries out the reaction tRNA(Asp) + L-aspartate + ATP = L-aspartyl-tRNA(Asp) + AMP + diphosphate. Its function is as follows. Catalyzes the attachment of L-aspartate to tRNA(Asp) in a two-step reaction: L-aspartate is first activated by ATP to form Asp-AMP and then transferred to the acceptor end of tRNA(Asp). The sequence is that of Aspartate--tRNA ligase from Erwinia tasmaniensis (strain DSM 17950 / CFBP 7177 / CIP 109463 / NCPPB 4357 / Et1/99).